The chain runs to 376 residues: Putative transcription factor egl-18 (376 aa).

Disordered stretches follow at residues 1–33, 65–122, 148–197, and 240–264; these read MSIS…CSGC, NNEL…LPDF, MVQQ…SDIP, and ATPS…PNAA. Basic and acidic residues predominate over residues 9-27; that stretch reads TRPESAEQQHHEVLQRPSD. 2 stretches are compositionally biased toward low complexity: residues 68–89 and 165–175; these read LKSS…RSSP and QQSVSPPQSKS. The span at 176–195 shows a compositional bias: basic and acidic residues; the sequence is VKIEDPMDQDVKQEESERSD. Residues 241–250 are compositionally biased toward polar residues; it reads TPSSQSQDSS. The segment at 266–290 adopts a GATA-type zinc-finger fold; it reads CSNCRTDKTTAWRRDAEGKLVCNPC.

In terms of tissue distribution, expressed in differentiated seam cells. Expressed in the head and trunk.

It localises to the nucleus. Probable transcription factor. Involved in embryonic development and in vulval development in larvae, acting redundantly, at least in part, with elt-6. Perhaps acting together with elt-6, may form a positive feedback loop to initiate and maintain lin-39 gene expression to ensure proper vulval precursor cell (VPC) fate specification. Together with elt-6, acts as a downstream target of the Wnt/beta-catenin asymmetry pathway, required to adopt or maintain the seam cell fate. Required in seam cells, acting redundantly with elt-6, to promote production of alae, expression of several seam-specific genes and maintenance of seam cells in an unfused state. Plays a role in longevity. May form a transcriptional circuit with GATA factors elt-3 and elt-6. The polypeptide is Putative transcription factor egl-18 (Caenorhabditis elegans).